The following is a 262-amino-acid chain: Snake venom serine protease (262 aa).

An N-terminal signal peptide occupies residues 1–18; it reads MVLIRVLANLLILQLSYA. The propeptide occupies 19–24; the sequence is QKSSEL. Residues 25–253 enclose the Peptidase S1 domain; sequence VIGGDECNIN…YTEWIQSIIA (229 aa). 6 disulfide bridges follow: Cys31–Cys167, Cys50–Cys66, Cys102–Cys260, Cys146–Cys214, Cys178–Cys193, and Cys204–Cys229. Residues His65 and Asp114 each act as charge relay system in the active site. N-linked (GlcNAc...) asparagine glycans are attached at residues Asn125 and Asn158. Ser208 acts as the Charge relay system in catalysis.

It belongs to the peptidase S1 family. Snake venom subfamily. As to quaternary structure, monomer. As to expression, expressed by the venom gland.

It localises to the secreted. In terms of biological role, snake venom serine protease that may act in the hemostasis system of the prey. In Crotalus durissus durissus (Central American rattlesnake), this protein is Snake venom serine protease.